The primary structure comprises 313 residues: Porphobilinogen deaminase (313 aa).

Residue C242 is modified to S-(dipyrrolylmethanemethyl)cysteine.

Belongs to the HMBS family. In terms of assembly, monomer. Requires dipyrromethane as cofactor.

It carries out the reaction 4 porphobilinogen + H2O = hydroxymethylbilane + 4 NH4(+). The protein operates within porphyrin-containing compound metabolism; protoporphyrin-IX biosynthesis; coproporphyrinogen-III from 5-aminolevulinate: step 2/4. Its function is as follows. Tetrapolymerization of the monopyrrole PBG into the hydroxymethylbilane pre-uroporphyrinogen in several discrete steps. This is Porphobilinogen deaminase from Yersinia pseudotuberculosis serotype O:3 (strain YPIII).